The following is a 261-amino-acid chain: Tryptophan synthase alpha chain (261 aa).

Residues glutamate 47 and aspartate 58 each act as proton acceptor in the active site.

It belongs to the TrpA family. As to quaternary structure, tetramer of two alpha and two beta chains.

The catalysed reaction is (1S,2R)-1-C-(indol-3-yl)glycerol 3-phosphate + L-serine = D-glyceraldehyde 3-phosphate + L-tryptophan + H2O. It functions in the pathway amino-acid biosynthesis; L-tryptophan biosynthesis; L-tryptophan from chorismate: step 5/5. In terms of biological role, the alpha subunit is responsible for the aldol cleavage of indoleglycerol phosphate to indole and glyceraldehyde 3-phosphate. The polypeptide is Tryptophan synthase alpha chain (Neisseria meningitidis serogroup B (strain ATCC BAA-335 / MC58)).